Reading from the N-terminus, the 160-residue chain is Cyanate hydratase (160 aa).

Active-site residues include Arg100, Glu103, and Ser126.

It belongs to the cyanase family.

It carries out the reaction cyanate + hydrogencarbonate + 3 H(+) = NH4(+) + 2 CO2. Its function is as follows. Catalyzes the reaction of cyanate with bicarbonate to produce ammonia and carbon dioxide. This is Cyanate hydratase from Aspergillus flavus (strain ATCC 200026 / FGSC A1120 / IAM 13836 / NRRL 3357 / JCM 12722 / SRRC 167).